Here is a 900-residue protein sequence, read N- to C-terminus: MTGTPASRGSLTHEPDRFSDPAWELLLAGQDMARRWRHDQLDVEHLIQVLFSDSSFRRWVEPLPLRSDDLLDRLEDVLADQPPARGDQLFIGEDLEQLLETADQVRGRWGDRSIDVPQLIVAVGADPRIGAELFAAQGLAVDRLESLLRQPSVSPAPAPPPVPTAASAPAPTPRSAPAPRVMAPEPEPMVELEREPSALEAYGRDLTEEAEAGSLDPVIGRDSEIRNLIKVLSRRSKNNPVLIGEPGVGKTAIAELLAQRIVAGEVPDSLQGLRLIALDLGALIAGAKFRGQFEERLRSVLEEVSRSDSGVVLFIDELHTVVGSDRSSTDAGSLLKPALARGDLRCIGATTPEEYRRTVEKDPALNRRFQQVLIREPDLELSLEILRGLRERYELHHGVTITDEAIQTANRLADRYISDRCLPDKAIDLIDEAAAQLKIEVTSKPQVVEEAEADLRRVELALLAAEEAPEEERIQLQRQRLEVSSRLDDLRRRWQEERTQLEELGQLLQQDEDLRHAIAEAEREGALEEAARLQYDQLHTVQQRREALEASQAEAQSAGTALLREQVEAGDIADLVARWTGIPVQRLLAGERRKLLALESHLSERVIGQVEAVAAVAAAIRRARAGMKDPRRPVGSFLFLGPTGVGKTELAKALATSLFDEEEALVRLDMSEFMERNASARLIGAPPGYVGYEEGGQLTEAVRRRPYAVLLLDEVEKAHPDVFNLLLQVLDDGRLTDSQGLTVDFRHTVVVMTSNLASPVILEHARSGSSDDAQLQQQVDAALSSQFRPEFLNRIDEVIRFRPLKVKDLVRIVRLQLADLSTLMAEQGLSLEVDDAVADSLARQGHEPEYGARPLRRVLRRQLENPLATQLLEERFRSAHGIRVRCGTDDGASLEFEPLE.

The 140-residue stretch at 15–154 (PDRFSDPAWE…ESLLRQPSVS (140 aa)) folds into the Clp R domain. 2 repeat regions span residues 18-81 (FSDP…LADQ) and 91-154 (IGED…PSVS). Positions 151 to 183 (PSVSPAPAPPPVPTAASAPAPTPRSAPAPRVMA) are disordered. A compositionally biased stretch (pro residues) spans 154–163 (SPAPAPPPVP). Residues 191 to 376 (ELEREPSALE…RRFQQVLIRE (186 aa)) are NBD1. 244–251 (GEPGVGKT) is a binding site for ATP. Positions 377 to 581 (PDLELSLEIL…IADLVARWTG (205 aa)) are linker. Residues 427-557 (IDLIDEAAAQ…LEASQAEAQS (131 aa)) are a coiled coil. The NBD2 stretch occupies residues 591–803 (ERRKLLALES…RIDEVIRFRP (213 aa)). ATP is bound at residue 641-648 (GPTGVGKT). Positions 804–900 (LKVKDLVRIV…GASLEFEPLE (97 aa)) are C-terminal.

Belongs to the ClpA/ClpB family. In terms of assembly, homohexamer. The oligomerization is ATP-dependent.

It is found in the cytoplasm. Its function is as follows. Part of a stress-induced multi-chaperone system, it is involved in the recovery of the cell from heat-induced damage, in cooperation with DnaK, DnaJ and GrpE. Acts before DnaK, in the processing of protein aggregates. Protein binding stimulates the ATPase activity; ATP hydrolysis unfolds the denatured protein aggregates, which probably helps expose new hydrophobic binding sites on the surface of ClpB-bound aggregates, contributing to the solubilization and refolding of denatured protein aggregates by DnaK. The sequence is that of Chaperone protein ClpB 2 (clpB2) from Parasynechococcus marenigrum (strain WH8102).